Reading from the N-terminus, the 370-residue chain is 3-isopropylmalate dehydrogenase (370 aa).

77 to 90 (GPKWDSVPYEVRPE) is a binding site for NAD(+). Arg-97, Arg-107, Arg-135, and Asp-226 together coordinate substrate. Residues Asp-226, Asp-250, and Asp-254 each contribute to the Mg(2+) site. Position 290–302 (290–302 (GSAPDIAGKGIAN)) interacts with NAD(+).

The protein belongs to the isocitrate and isopropylmalate dehydrogenases family. LeuB type 1 subfamily. In terms of assembly, homodimer. Requires Mg(2+) as cofactor. It depends on Mn(2+) as a cofactor.

The protein resides in the cytoplasm. It catalyses the reaction (2R,3S)-3-isopropylmalate + NAD(+) = 4-methyl-2-oxopentanoate + CO2 + NADH. The protein operates within amino-acid biosynthesis; L-leucine biosynthesis; L-leucine from 3-methyl-2-oxobutanoate: step 3/4. Its function is as follows. Catalyzes the oxidation of 3-carboxy-2-hydroxy-4-methylpentanoate (3-isopropylmalate) to 3-carboxy-4-methyl-2-oxopentanoate. The product decarboxylates to 4-methyl-2 oxopentanoate. This chain is 3-isopropylmalate dehydrogenase, found in Rhizobium etli (strain ATCC 51251 / DSM 11541 / JCM 21823 / NBRC 15573 / CFN 42).